Here is a 153-residue protein sequence, read N- to C-terminus: UPF0102 protein Pnap_0271 (153 aa).

This sequence belongs to the UPF0102 family.

This is UPF0102 protein Pnap_0271 from Polaromonas naphthalenivorans (strain CJ2).